A 285-amino-acid polypeptide reads, in one-letter code: BAG family molecular chaperone regulator 2 (285 aa).

Residues 37–113 (RGIRVRVKYG…LILIEDPISQ (77 aa)) enclose the Ubiquitin-like domain. Residues 132-210 (AISDISFQVE…KYVEALDLLK (79 aa)) enclose the BAG domain. Residue Ser-244 is modified to Phosphoserine.

Binds to the ATPase domain of HSP70/HSC70 chaperones.

Co-chaperone that regulates diverse cellular pathways, such as programmed cell death and stress responses. In Arabidopsis thaliana (Mouse-ear cress), this protein is BAG family molecular chaperone regulator 2 (BAG2).